The chain runs to 320 residues: GPI-specific phospholipase A2-like PGAP3 (320 aa).

The signal sequence occupies residues 1–20 (MAGLAARLVLLAGAAALASG). At 21–98 (SQGDREPVYR…QFHGKWPFSR (78 aa)) the chain is on the lumenal side. Asn-40 is a glycosylation site (N-linked (GlcNAc...) asparagine). A helical transmembrane segment spans residues 99 to 119 (FLFFQEPASAVASFLNGLASL). Residues 120–135 (VMLCRYRTFVPASSPM) are Cytoplasmic-facing. A helical membrane pass occupies residues 136 to 156 (YHTCVAFAWVSLNAWFWSTVF). Residues 157–169 (HTRDTDLTEKMDY) lie on the Lumenal side of the membrane. A helical transmembrane segment spans residues 170–190 (FCASTVILHSIYLCCVRTVGL). Topologically, residues 191 to 193 (QHP) are cytoplasmic. Residues 194–214 (AVVSAFRALLLLMLTVHVSYL) traverse the membrane as a helical segment. Residues 215–224 (SLIRFDYGYN) are Lumenal-facing. Residues 225 to 245 (LVANVAIGLVNVVWWLAWCLW) traverse the membrane as a helical segment. At 246–257 (NQRRLPHVRKCV) the chain is on the cytoplasmic side. Residues 258–278 (VVVLLLQGLSLLELLDFPPLF) form a helical membrane-spanning segment. Position 279 (Trp-279) is a topological domain, lumenal. Residues 280 to 299 (VLDAHAIWHISTIPVHVLFF) form a helical membrane-spanning segment. Residues 300–320 (SFLEDDSLYLLKESEDKFKLD) lie on the Cytoplasmic side of the membrane.

This sequence belongs to the PGAP3 family. In terms of tissue distribution, ubiquitously expressed, with highest levels in thyroid and placenta.

Its subcellular location is the golgi apparatus membrane. Its function is as follows. Involved in the fatty acid remodeling steps of GPI-anchor maturation where the unsaturated acyl chain at sn-2 of inositol phosphate is replaced by a saturated stearoyl chain. May catalyze the first step of the fatty acid remodeling, by removing the unsaturated acyl chain at sn-2 of inositol phosphate, generating a lyso-GPI intermediate. The fatty acid remodeling steps is critical for the integration of GPI-APs into lipid rafts. The chain is GPI-specific phospholipase A2-like PGAP3 from Homo sapiens (Human).